A 148-amino-acid chain; its full sequence is Ubiquitin-conjugating enzyme E2 29 (148 aa).

The region spanning 1–147 (MATRRILKEL…ARSWTQKYAL (147 aa)) is the UBC core domain. The Glycyl thioester intermediate role is filled by Cys85.

This sequence belongs to the ubiquitin-conjugating enzyme family.

The catalysed reaction is S-ubiquitinyl-[E1 ubiquitin-activating enzyme]-L-cysteine + [E2 ubiquitin-conjugating enzyme]-L-cysteine = [E1 ubiquitin-activating enzyme]-L-cysteine + S-ubiquitinyl-[E2 ubiquitin-conjugating enzyme]-L-cysteine.. The protein operates within protein modification; protein ubiquitination. Its function is as follows. Accepts the ubiquitin from the E1 complex and catalyzes its covalent attachment to other proteins. This chain is Ubiquitin-conjugating enzyme E2 29 (UBC29), found in Arabidopsis thaliana (Mouse-ear cress).